The sequence spans 443 residues: ATP-dependent protease ATPase subunit HslU (443 aa).

Residues isoleucine 18 and 60–65 contribute to the ATP site; that span reads GVGKTE. A disordered region spans residues 141–165; sequence DQWGQNEENDTDSSTRQSFRKKLRE. ATP-binding residues include aspartate 256, glutamate 321, and arginine 393.

This sequence belongs to the ClpX chaperone family. HslU subfamily. As to quaternary structure, a double ring-shaped homohexamer of HslV is capped on each side by a ring-shaped HslU homohexamer. The assembly of the HslU/HslV complex is dependent on binding of ATP.

Its subcellular location is the cytoplasm. Its function is as follows. ATPase subunit of a proteasome-like degradation complex; this subunit has chaperone activity. The binding of ATP and its subsequent hydrolysis by HslU are essential for unfolding of protein substrates subsequently hydrolyzed by HslV. HslU recognizes the N-terminal part of its protein substrates and unfolds these before they are guided to HslV for hydrolysis. This Photobacterium profundum (strain SS9) protein is ATP-dependent protease ATPase subunit HslU.